A 213-amino-acid chain; its full sequence is Motile sperm domain-containing protein 1 (213 aa).

The MSP domain occupies 16-143 (PVFVFPTELI…KEHLTESLFF (128 aa)). Helical transmembrane passes span 159–179 (SLLT…PTLG) and 191–211 (LSVN…MAIF). Positions 205–208 (LITM) match the Nuclear export signal motif.

Its subcellular location is the endoplasmic reticulum membrane. It is found in the golgi apparatus membrane. Its function is as follows. Plays a role in differentiation and/or proliferation of mesenchymal stem cells. Proposed to be involved in epithelial-to-mesenchymal transition (EMT). However, another study suggests that it is not required for EMT or stem cell self-renewal and acts during later stages of differentiation. The protein is Motile sperm domain-containing protein 1 (MOSPD1) of Bos taurus (Bovine).